The primary structure comprises 940 residues: UvrABC system protein A (940 aa).

Residue 31-38 participates in ATP binding; sequence GLSGSGKS. The segment at 253-280 adopts a C4-type zinc-finger fold; it reads CPICGYSMRELEPRLFSFNNPAGACPTC. 2 consecutive ABC transporter domains span residues 310-587 and 607-937; these read WDRR…PESL and ANPE…RFLK. 640–647 contacts ATP; the sequence is GVSGSGKS. The C4-type zinc finger occupies 740 to 766; sequence CEACQGDGVIKVEMHFLPDIYVPCDQC.

This sequence belongs to the ABC transporter superfamily. UvrA family. In terms of assembly, forms a heterotetramer with UvrB during the search for lesions. Interacts with TRCF (Mfd). UvrB and TRCF binding to UvrA could be mutually exclusive.

The protein resides in the cytoplasm. Functionally, the UvrABC repair system catalyzes the recognition and processing of DNA lesions. UvrA is an ATPase and a DNA-binding protein. A damage recognition complex composed of 2 UvrA and 2 UvrB subunits scans DNA for abnormalities. When the presence of a lesion has been verified by UvrB, the UvrA molecules dissociate. The chain is UvrABC system protein A from Escherichia coli (strain K12).